The following is a 329-amino-acid chain: 4-diphosphocytidyl-2-C-methyl-D-erythritol kinase (329 aa).

Lys-14 is a catalytic residue. 117–127 (PSGAGMGGASS) serves as a coordination point for ATP. The active site involves Asp-166.

The protein belongs to the GHMP kinase family. IspE subfamily.

It carries out the reaction 4-CDP-2-C-methyl-D-erythritol + ATP = 4-CDP-2-C-methyl-D-erythritol 2-phosphate + ADP + H(+). Its pathway is isoprenoid biosynthesis; isopentenyl diphosphate biosynthesis via DXP pathway; isopentenyl diphosphate from 1-deoxy-D-xylulose 5-phosphate: step 3/6. Catalyzes the phosphorylation of the position 2 hydroxy group of 4-diphosphocytidyl-2C-methyl-D-erythritol. The chain is 4-diphosphocytidyl-2-C-methyl-D-erythritol kinase from Rhodopirellula baltica (strain DSM 10527 / NCIMB 13988 / SH1).